Reading from the N-terminus, the 308-residue chain is Aldo-keto reductase AKR2E4 (308 aa).

Residues glycine 22–lysine 29 and aspartate 53 contribute to the NADP(+) site. Tyrosine 58 (proton donor) is an active-site residue. Residues serine 158–asparagine 159, arginine 215, and lysine 259–asparagine 269 contribute to the NADP(+) site.

It belongs to the short-chain dehydrogenases/reductases (SDR) family. As to expression, detected in hemolymph (at protein level). Detected in larval ovary.

Its activity is regulated as follows. Subject to substrate inhibition by high levels of 3-dehydroecdysone. Its function is as follows. NADP-dependent oxidoreductase with high 3-dehydroecdysone reductase activity. May play a role in the regulation of molting. Has lower activity with phenylglyoxal and isatin (in vitro). Has no activity with NADH as cosubstrate. Has no activity with nitrobenzaldehyde and 3-hydroxybenzaldehyde. The protein is Aldo-keto reductase AKR2E4 (akr2e) of Bombyx mori (Silk moth).